Here is a 651-residue protein sequence, read N- to C-terminus: MSGVRAVRISIESACEKQVQEVGLDGTETYLQPLSMSQNLARLAQRIDFSQGSGSEEEEAAGAEGDAQDWAGAGSSADQDDEEGLVKFQPSLWPWDSVRNNLRSALTEMCVLYDVLSIVRDKKFMTLDPVSQDALPPKQNPQTLQLISKKKSLAGAAQILLKGAERLTKSVTENQENKLQRDFNSELLRLRQHWKLRKVGDKILGDLSYRSAGSLFPHHGTFEVIKNTDIDLDKKIPEDYCPLDVQIPSDLEGSAYIRVSIQKQAPDIGDLGTVNLFKRPLPKSKPGSPHWQTKLEAAQNVLLCKEIFAQLSREAVQIKSQIPHIVVKNQIISQPFPSLQLSISLCHSSNDKKSPKSATEKQSPEDHLYVLEHNLHLLIREFHKQTLSSIMMPHPASAPFGHKRMRLSGPQAFDKNEINSIQSSEGLLEKIIKQAKHIFLRSRTAATIDSLASRIEDPQIQAHWSNINDVYESSVKVLITSQGYEQICKSIQLQLNIGVEQIRVVHRDGRVITLSHEGQELQDFLLSQMSQHQVHAVQQLAKVMGWQVLSFSNHVGLGPVESIGNASAITVASPNGDYAISVRNGPESGSKIMVQFPRNQCKDLPKSDVLQDSKWNHLRGPFKEVQWNKMEGRNFVYKMELLMSALSPCLL.

A disordered region spans residues Gln51–Glu83. The span at Gly62–Gly74 shows a compositional bias: low complexity.

This sequence belongs to the Mediator complex subunit 17 family. In terms of assembly, component of the Mediator complex, which is composed of MED1, MED4, MED6, MED7, MED8, MED9, MED10, MED11, MED12, MED13, MED13L, MED14, MED15, MED16, MED17, MED18, MED19, MED20, MED21, MED22, MED23, MED24, MED25, MED26, MED27, MED29, MED30, MED31, CCNC, CDK8 and CDC2L6/CDK11. The MED12, MED13, CCNC and CDK8 subunits form a distinct module termed the CDK8 module. Mediator containing the CDK8 module is less active than Mediator lacking this module in supporting transcriptional activation. Individual preparations of the Mediator complex lacking one or more distinct subunits have been variously termed ARC, CRSP, DRIP, PC2, SMCC and TRAP. Interacts with GATA1, PPARG and STAT2.

The protein localises to the nucleus. Its function is as follows. Component of the Mediator complex, a coactivator involved in the regulated transcription of nearly all RNA polymerase II-dependent genes. Mediator functions as a bridge to convey information from gene-specific regulatory proteins to the basal RNA polymerase II transcription machinery. Mediator is recruited to promoters by direct interactions with regulatory proteins and serves as a scaffold for the assembly of a functional preinitiation complex with RNA polymerase II and the general transcription factors. In Bos taurus (Bovine), this protein is Mediator of RNA polymerase II transcription subunit 17 (MED17).